Reading from the N-terminus, the 33-residue chain is GLLDSIKGMAISAGKGALQNLLKVASCKLDKTC.

Cys27 and Cys33 are disulfide-bonded.

The protein belongs to the frog skin active peptide (FSAP) family. Brevinin subfamily. As to expression, expressed by the skin dorsal glands.

It is found in the secreted. Functionally, shows antibacterial activity against both Gram-positive and Gram-negative bacteria and against the fungus C.albicans. Has no hemolytic activity. This Pelophylax nigromaculatus (Black-spotted frog) protein is Nigrocin-1.